The following is a 246-amino-acid chain: tRNA pseudouridine synthase A (246 aa).

The active-site Nucleophile is D52. A substrate-binding site is contributed by Y111.

Belongs to the tRNA pseudouridine synthase TruA family. In terms of assembly, homodimer.

The enzyme catalyses uridine(38/39/40) in tRNA = pseudouridine(38/39/40) in tRNA. In terms of biological role, formation of pseudouridine at positions 38, 39 and 40 in the anticodon stem and loop of transfer RNAs. The polypeptide is tRNA pseudouridine synthase A (Rhodopseudomonas palustris (strain BisA53)).